The chain runs to 93 residues: Pyrimidine/purine nucleoside phosphorylase (93 aa).

It belongs to the nucleoside phosphorylase PpnP family.

The catalysed reaction is a purine D-ribonucleoside + phosphate = a purine nucleobase + alpha-D-ribose 1-phosphate. The enzyme catalyses adenosine + phosphate = alpha-D-ribose 1-phosphate + adenine. It catalyses the reaction cytidine + phosphate = cytosine + alpha-D-ribose 1-phosphate. It carries out the reaction guanosine + phosphate = alpha-D-ribose 1-phosphate + guanine. The catalysed reaction is inosine + phosphate = alpha-D-ribose 1-phosphate + hypoxanthine. The enzyme catalyses thymidine + phosphate = 2-deoxy-alpha-D-ribose 1-phosphate + thymine. It catalyses the reaction uridine + phosphate = alpha-D-ribose 1-phosphate + uracil. It carries out the reaction xanthosine + phosphate = alpha-D-ribose 1-phosphate + xanthine. Its function is as follows. Catalyzes the phosphorolysis of diverse nucleosides, yielding D-ribose 1-phosphate and the respective free bases. Can use uridine, adenosine, guanosine, cytidine, thymidine, inosine and xanthosine as substrates. Also catalyzes the reverse reactions. This Aliivibrio salmonicida (strain LFI1238) (Vibrio salmonicida (strain LFI1238)) protein is Pyrimidine/purine nucleoside phosphorylase.